Reading from the N-terminus, the 416-residue chain is Iron-regulated transcriptional activator AFT2 (416 aa).

Aspartate 53 contributes to the Zn(2+) binding site. DNA contacts are provided by arginine 54, histidine 55, lysine 58, isoleucine 74, glutamate 75, arginine 76, serine 77, aspartate 78, and lysine 81. Histidine 55 serves as a coordination point for Zn(2+). Position 86 (cysteine 86) interacts with Zn(2+). Serine 88 is a DNA binding site. Cysteine 109 contributes to the Zn(2+) binding site. Residues valine 119 and arginine 120 each coordinate DNA. 2 residues coordinate Zn(2+): histidine 133 and histidine 135. 2 residues coordinate DNA: glutamine 157 and asparagine 159. The short motif at 187 to 189 (CDC) is the CDC [2Fe-2S] cluster binding motif element.

As to quaternary structure, homodimer. Dimerization decreases the DNA-binding activity.

It is found in the nucleus. Its activity is regulated as follows. Dimerization via the binding of Fe(2+) or a [2Fe-2S] cluster decreases the DNA-binding activity. Its function is as follows. Transcription factor required for iron homeostasis and resistance to oxidative stress. With AFT1, activates the gene expression in response to low-iron conditions, also called iron regulon. Recognizes the consensus iron-responsive element (Fe-RE) sequence 5'-CACCC-3' in the promoters of target genes. The transcription activation by AFT1 and AFT2 depends on the mitochondrial iron-sulfur protein biosynthesis pathway. In high iron condition, the presence of iron leads to dimerization, which in turn leads to a decrease in DNA affinity. This Saccharomyces cerevisiae (strain ATCC 204508 / S288c) (Baker's yeast) protein is Iron-regulated transcriptional activator AFT2.